The primary structure comprises 546 residues: MDPKAGGGGEEDDCVDSGAETGGSDYSHLSSTSSELSVEEAQDPFLVSIHIIADPGESQPLQEAIDNVLAWIHPDLPLFRVSERRACRRRRKPPKGAQPALAVVLFLQEEYGEEQILQLHRTLQQPPWRHHHTEQVHGRFLPYLPCSQDFFTLAPGTPLWAIRPVHYGKEIVRFTVYCRHDNYADSLRFYQLILRRSPSQKKADFCIFPIFSNLDVDIQFSLKRLPCDQCPVPTDSSVLEFRVRDIGELVPLLPNPCSPISEGRWQTEDHDGNKILLQAQRVHKKFPKPGRVHHSSEKKRHSTPLPSTAVPSHTPGSSQQSPLNSPHPGPIRTGLPPGHQQEFAGRANSTPNPPWSFQRSKSLFCLPTGGPSLASSAEPQWFSNTGAPGHRASEWRHGHLLSIDDLEGAQETDVDTGLRLSSSDLSVVSAYSAPSRFCSTVETPLPSERCSSHWAAHKDSREGPLPTVSKVTTEASWASLPFFTKRSSSSSATARAAPPAPSTSTLTDSSPQLPCDSPKVKQTDGDMPPPPGSAGPGDNDMEEFYI.

3 disordered regions span residues 1–37, 285–361, and 488–546; these read MDPK…SELS, KFPK…QRSK, and SSSS…EFYI. A compositionally biased stretch (low complexity) spans 24-36; that stretch reads SDYSHLSSTSSEL. Basic residues predominate over residues 285-302; that stretch reads KFPKPGRVHHSSEKKRHS. Composition is skewed to polar residues over residues 304–324 and 347–361; these read PLPS…SPLN and ANST…QRSK. The segment covering 488–511 has biased composition (low complexity); sequence SSSSATARAAPPAPSTSTLTDSSP.

Belongs to the FAM124 family.

The chain is Protein FAM124A (FAM124A) from Pongo abelii (Sumatran orangutan).